We begin with the raw amino-acid sequence, 220 residues long: MGAPLAAALGALHYLALFLQLGGATRPAGHAPWDNHVSGHALFTETPHDMTARTGEDVEMACSFRGSGSPSYSLEIQWWYLRSHRDWTDKQTWASNQLKASQQEDSGKDATKISVVKVVGSNISHKLRLSRVKPTDEGTYECRVIDFSDGGRGVPRVLCLLIPLPAPPRAPRPRGQPPGEEPGRGPTLLFLIILPGTGSGTPREAEPHQPHAGGCPARQS.

Positions 1–24 (MGAPLAAALGALHYLALFLQLGGA) are cleaved as a signal peptide. Residues 41-158 (ALFTETPHDM…DGGRGVPRVL (118 aa)) form the Ig-like domain. The cysteines at positions 62 and 142 are disulfide-linked. Pro residues predominate over residues 165 to 180 (PAPPRAPRPRGQPPGE). Residues 165–220 (PAPPRAPRPRGQPPGEEPGRGPTLLFLIILPGTGSGTPREAEPHQPHAGGCPARQS) form a disordered region.

In Mus musculus (Mouse), this protein is V-set and transmembrane domain-containing protein 2-like protein (Vstm2l).